Reading from the N-terminus, the 320-residue chain is Tyrosine recombinase XerC (320 aa).

In terms of domain architecture, Core-binding (CB) spans 14–104; the sequence is ADVREAVASW…SLRSFARHLE (91 aa). In terms of domain architecture, Tyr recombinase spans 125–311; sequence RLPRPLPVAA…DSARLMSAFE (187 aa). Active-site residues include R170, K195, H263, R266, and H289. The active-site O-(3'-phospho-DNA)-tyrosine intermediate is the Y298.

The protein belongs to the 'phage' integrase family. XerC subfamily. In terms of assembly, forms a cyclic heterotetrameric complex composed of two molecules of XerC and two molecules of XerD.

The protein resides in the cytoplasm. In terms of biological role, site-specific tyrosine recombinase, which acts by catalyzing the cutting and rejoining of the recombining DNA molecules. The XerC-XerD complex is essential to convert dimers of the bacterial chromosome into monomers to permit their segregation at cell division. It also contributes to the segregational stability of plasmids. The chain is Tyrosine recombinase XerC from Methylobacterium sp. (strain 4-46).